The chain runs to 255 residues: 3-oxoacyl-[acyl-carrier-protein] reductase MabA (255 aa).

Residues 33–35, Arg55, 69–70, Gly98, Tyr161, Lys165, Ile194, and Arg205 contribute to the NADP(+) site; these read RGI and DV. The active-site Proton acceptor is Tyr161.

The protein belongs to the short-chain dehydrogenases/reductases (SDR) family. As to quaternary structure, homotetramer.

Its subcellular location is the secreted. It is found in the cell wall. It catalyses the reaction a (3R)-hydroxyacyl-[ACP] + NADP(+) = a 3-oxoacyl-[ACP] + NADPH + H(+). It functions in the pathway lipid metabolism; mycolic acid biosynthesis. Its function is as follows. Part of the mycobacterial fatty acid elongation system FAS-II, which is involved in mycolic acid biosynthesis. Catalyzes the NADPH-dependent reduction of beta-ketoacyl derivatives, the second step of the FAS-II elongation cycle. The chain is 3-oxoacyl-[acyl-carrier-protein] reductase MabA from Mycobacterium avium.